The primary structure comprises 189 residues: GTPase NRas (189 aa).

Residues 10–18 (GAGGVGKSA) and 29–30 (VD) each bind GTP. Positions 32 to 40 (YDPTIEDSY) match the Effector region motif. Residue 57 to 61 (DTAGQ) participates in GTP binding. Ser89 is modified (phosphoserine). Residue 116 to 119 (NKCD) participates in GTP binding. The hypervariable region stretch occupies residues 166-185 (YRMKKLNSNDDGTQGCMGLP). Lys170 participates in a covalent cross-link: Glycyl lysine isopeptide (Lys-Gly) (interchain with G-Cter in ubiquitin). Residue Cys181 is the site of S-palmitoyl cysteine attachment. Cys186 carries S-farnesyl cysteine lipidation. Residues 187–189 (VVM) constitute a propeptide, removed in mature form.

Belongs to the small GTPase superfamily. Ras family. Interacts (active GTP-bound form preferentially) with RGS14. Interacts (active GTP-bound form) with RASSF7. Interacts (active GTP-bound form) with both SHOC2 and PP1c (all isoforms) to form a tertiary complex; SHOC2 and PP1c preferably bind M-Ras/MRAS, but they also bind K-Ras/KRAS, N-Ras/NRAS and H-Ras/HRAS. Post-translationally, palmitoylated by the ZDHHC9-GOLGA7 complex. Depalmitoylated by ABHD17A, ABHD17B and ABHD17C. A continuous cycle of de- and re-palmitoylation regulates rapid exchange between plasma membrane and Golgi. Acetylation at Lys-104 prevents interaction with guanine nucleotide exchange factors (GEFs). In terms of processing, ubiquitinated by the BCR(LZTR1) E3 ubiquitin ligase complex at Lys-170 in a non-degradative manner, leading to inhibit Ras signaling by decreasing Ras association with membranes. Post-translationally, phosphorylation at Ser-89 enhances NRAS association with its downstream effectors.

The protein resides in the cell membrane. The protein localises to the golgi apparatus membrane. It catalyses the reaction GTP + H2O = GDP + phosphate + H(+). Its activity is regulated as follows. Alternates between an inactive form bound to GDP and an active form bound to GTP. Activated by a guanine nucleotide-exchange factor (GEF) and inactivated by a GTPase-activating protein (GAP). Ras proteins bind GDP/GTP and possess intrinsic GTPase activity. The polypeptide is GTPase NRas (NRAS) (Cavia porcellus (Guinea pig)).